Reading from the N-terminus, the 380-residue chain is MSLSDWHLAVKLADQPLTPKSILRLPETELGEYSLGGYSISFLKQLIAGKLQESVPDPELIDLIYCGRKLKDDQTLDFYGIQPGSTVHVLRKSWPEPDQKPEPVDKVAAMREFRVLHTALHSSSSYREAVFKMLSNKESLDQIIVATPGLSSDPIALGVLQDKDLFSVFADPNMLDTLVPAHPALVNAIVLVLHSVAGSAPMPGTDSSSRSMPSSSYRDMPGGFLFEGLSDDEDDFHPNTRSTPSSSTPSSRPASLGYSGAAGPRPITQSELATALALASTPESSSHTPTPGTQGHSSGTSPMSSGVQSGTPITNDLFSQALQHALQASGQPSLQSQWQPQLQQLRDMGIQDDELSLRALQATGGDIQAALELIFAGGAP.

The region spanning 18-98 (TPKSILRLPE…VLRKSWPEPD (81 aa)) is the Ubiquitin-like domain. Residues 200–313 (APMPGTDSSS…SSGVQSGTPI (114 aa)) form a disordered region. Low complexity predominate over residues 206 to 221 (DSSSRSMPSSSYRDMP). At Ser230 the chain carries Phosphoserine. 2 stretches are compositionally biased toward low complexity: residues 240 to 253 (TRST…SSRP) and 270 to 293 (SELA…TPGT). Over residues 294–313 (QGHSSGTSPMSSGVQSGTPI) the composition is skewed to polar residues. The UBA domain maps to 333–377 (SLQSQWQPQLQQLRDMGIQDDELSLRALQATGGDIQAALELIFAG).

In terms of assembly, binds ubiquitin. Interacts with MAVS; this interaction enhances TRIM21-dependent 'Lys-27'-linked polyubiquitination of MAVS. Post-translationally, deubiquitinated by OTUD4 which stabilizes UBL7 expression. As to expression, ubiquitous. Highly expressed in heart, skeletal muscle, testis, thyroid and adrenal gland.

Functionally, interferon-stimulated protein that positively regulates RNA virus-triggered innate immune signaling. Mechanistically, promotes 'Lys-27'-linked polyubiquitination of MAVS through TRIM21 leading to enhanced the IFN signaling pathway. The sequence is that of Ubiquitin-like protein 7 (UBL7) from Homo sapiens (Human).